Consider the following 416-residue polypeptide: Serine protease hepsin (416 aa).

Residues 1 to 18 are Cytoplasmic-facing; that stretch reads MAKEGGRTAPCCSRPKVA. Residues 19–39 form a helical; Signal-anchor for type II membrane protein membrane-spanning segment; it reads ALTVGTLLFLTGIGAASWAIV. Residues 40–416 are Extracellular-facing; the sequence is TILLRSDQEP…SEATGMVTQP (377 aa). An SRCR domain is found at 53 to 150; that stretch reads VQLSPGDSRL…RGRFLTATCQ (98 aa). 8 disulfides stabilise this stretch: cysteine 76/cysteine 139, cysteine 89/cysteine 149, cysteine 118/cysteine 137, cysteine 152/cysteine 276, cysteine 187/cysteine 203, cysteine 290/cysteine 358, cysteine 321/cysteine 337, and cysteine 348/cysteine 380. An N-linked (GlcNAc...) asparagine glycan is attached at asparagine 111. Positions 162-404 constitute a Peptidase S1 domain; sequence IVGGQDSSLG…FREWIFQAIK (243 aa). Active-site charge relay system residues include histidine 202 and aspartate 256. The Charge relay system role is filled by serine 352.

Belongs to the peptidase S1 family. Widely expressed. Present in brain, heart, kidney, liver, stomach, muscle, lung, testis, skin and eye. Not expressed in ovary and thynus. In inner ear tissues, expressed in stria vascularis, modiolus, organ of Corti and spiral ganglion.

Its subcellular location is the cell membrane. It is found in the apical cell membrane. It catalyses the reaction Cleavage after basic amino-acid residues, with Arg strongly preferred to Lys.. Its function is as follows. Serine protease that cleaves extracellular substrates, and contributes to the proteolytic processing of growth factors, such as HGF and MST1/HGFL. Plays a role in cell growth and maintenance of cell morphology. Plays a role in the proteolytic processing of ACE2. Mediates the proteolytic cleavage of urinary UMOD that is required for UMOD polymerization. The polypeptide is Serine protease hepsin (Hpn) (Rattus norvegicus (Rat)).